Consider the following 83-residue polypeptide: Small ribosomal subunit protein uS17 (83 aa).

The protein belongs to the universal ribosomal protein uS17 family. As to quaternary structure, part of the 30S ribosomal subunit.

In terms of biological role, one of the primary rRNA binding proteins, it binds specifically to the 5'-end of 16S ribosomal RNA. The chain is Small ribosomal subunit protein uS17 from Francisella tularensis subsp. holarctica (strain FTNF002-00 / FTA).